A 626-amino-acid polypeptide reads, in one-letter code: Endogenous retrovirus group S71 member 1 Env polyprotein (626 aa).

Residues 1-38 (MGPEAWVRPLKTAPKPGEAIRLILFIYLSCFFLPVMSS) form the signal peptide. Residues 39–438 (EPSYSFLLTS…PPELHPRLHQ (400 aa)) form a surface protein region. At 39–575 (EPSYSFLLTS…FNWNPWLTTL (537 aa)) the chain is on the extracellular side. A CXXC motif is present at residues 302-305 (CWLC). The segment at 439-459 (AVPLLVPLLAGLSIAGSAAIG) is fusion peptide. The segment at 439 to 626 (AVPLLVPLLA…KTQYDTLVNN (188 aa)) is transmembrane protein. The short motif at 503–519 (LQNCRCLDLLFLSQGGL) is the CKS-17 element. Cysteines 520 and 527 form a disulfide. Positions 520 to 528 (CAALGESCC) match the CX6CC motif. A helical transmembrane segment spans residues 576-596 (ITGLAGPLLILLLSLIFGPCI). Topologically, residues 597–626 (LNSFLNFIKQRIASVKLTYLKTQYDTLVNN) are cytoplasmic.

The protein belongs to the gamma type-C retroviral envelope protein family. HERV class-I T env subfamily. Post-translationally, the CXXC motif is highly conserved across a broad range of retroviral envelope proteins. It is thought to participate in the formation of a labile disulfide bond possibly with the CX6CC motif present in the transmembrane domain. In terms of tissue distribution, expressed at higher level in thyroid. Expressed at lower level in adrenal, bone marrow, brain, breast, kidney, ovary, placenta, prostate, skin, testis and trachea.

It is found in the cell membrane. Its function is as follows. Retroviral envelope proteins mediate receptor recognition and membrane fusion during early infection. Endogenous envelope proteins may have kept, lost or modified their original function during evolution. This endogenous envelope protein has lost its original fusogenic properties. The protein is Endogenous retrovirus group S71 member 1 Env polyprotein (ERVS71-1) of Homo sapiens (Human).